A 396-amino-acid polypeptide reads, in one-letter code: NADH-quinone oxidoreductase subunit D (396 aa).

This sequence belongs to the complex I 49 kDa subunit family. As to quaternary structure, NDH-1 is composed of 14 different subunits. Subunits NuoB, C, D, E, F, and G constitute the peripheral sector of the complex.

Its subcellular location is the cell inner membrane. The catalysed reaction is a quinone + NADH + 5 H(+)(in) = a quinol + NAD(+) + 4 H(+)(out). In terms of biological role, NDH-1 shuttles electrons from NADH, via FMN and iron-sulfur (Fe-S) centers, to quinones in the respiratory chain. The immediate electron acceptor for the enzyme in this species is believed to be ubiquinone. Couples the redox reaction to proton translocation (for every two electrons transferred, four hydrogen ions are translocated across the cytoplasmic membrane), and thus conserves the redox energy in a proton gradient. This Bartonella quintana (strain Toulouse) (Rochalimaea quintana) protein is NADH-quinone oxidoreductase subunit D.